The sequence spans 167 residues: NAD(P)H-quinone oxidoreductase subunit I, chloroplastic (167 aa).

4Fe-4S ferredoxin-type domains lie at 55-84 and 95-124; these read GRIH…VDWK and LNYS…MTEE. 8 residues coordinate [4Fe-4S] cluster: C64, C67, C70, C74, C104, C107, C110, and C114.

The protein belongs to the complex I 23 kDa subunit family. NDH is composed of at least 16 different subunits, 5 of which are encoded in the nucleus. The cofactor is [4Fe-4S] cluster.

The protein localises to the plastid. It localises to the chloroplast thylakoid membrane. The enzyme catalyses a plastoquinone + NADH + (n+1) H(+)(in) = a plastoquinol + NAD(+) + n H(+)(out). It carries out the reaction a plastoquinone + NADPH + (n+1) H(+)(in) = a plastoquinol + NADP(+) + n H(+)(out). In terms of biological role, NDH shuttles electrons from NAD(P)H:plastoquinone, via FMN and iron-sulfur (Fe-S) centers, to quinones in the photosynthetic chain and possibly in a chloroplast respiratory chain. The immediate electron acceptor for the enzyme in this species is believed to be plastoquinone. Couples the redox reaction to proton translocation, and thus conserves the redox energy in a proton gradient. In Morus indica (Mulberry), this protein is NAD(P)H-quinone oxidoreductase subunit I, chloroplastic.